The primary structure comprises 293 residues: Phosphatidate cytidylyltransferase (293 aa).

8 consecutive transmembrane segments (helical) span residues Ile6–Tyr26, Ile51–Val71, Pro73–Phe93, Met97–Pro117, Leu157–Met177, Val195–Tyr215, Trp218–Leu238, and Val273–Leu293.

Belongs to the CDS family.

Its subcellular location is the cell membrane. The enzyme catalyses a 1,2-diacyl-sn-glycero-3-phosphate + CTP + H(+) = a CDP-1,2-diacyl-sn-glycerol + diphosphate. It participates in phospholipid metabolism; CDP-diacylglycerol biosynthesis; CDP-diacylglycerol from sn-glycerol 3-phosphate: step 3/3. The protein is Phosphatidate cytidylyltransferase (cdsA) of Synechocystis sp. (strain ATCC 27184 / PCC 6803 / Kazusa).